A 77-amino-acid chain; its full sequence is DNA-directed RNA polymerase subunit epsilon (77 aa).

The protein belongs to the RNA polymerase subunit epsilon family. RNAP is composed of a core of 2 alpha, a beta and a beta' subunit. The core is associated with a delta subunit, and at least one of epsilon or omega. When a sigma factor is associated with the core the holoenzyme is formed, which can initiate transcription.

The enzyme catalyses RNA(n) + a ribonucleoside 5'-triphosphate = RNA(n+1) + diphosphate. A non-essential component of RNA polymerase (RNAP). The sequence is that of DNA-directed RNA polymerase subunit epsilon from Streptococcus pneumoniae serotype 19F (strain G54).